Reading from the N-terminus, the 217-residue chain is Small ribosomal subunit protein uS3 (217 aa).

One can recognise a KH type-2 domain in the interval 38–106 (IRKFIQKELA…QVHINIVEIK (69 aa)).

This sequence belongs to the universal ribosomal protein uS3 family. In terms of assembly, part of the 30S ribosomal subunit. Forms a tight complex with proteins S10 and S14.

Binds the lower part of the 30S subunit head. Binds mRNA in the 70S ribosome, positioning it for translation. The chain is Small ribosomal subunit protein uS3 from Streptococcus thermophilus (strain CNRZ 1066).